The sequence spans 127 residues: Large ribosomal subunit protein eL32 (127 aa).

The span at 38 to 48 (WRRPKGIDSKM) shows a compositional bias: basic and acidic residues. The tract at residues 38 to 66 (WRRPKGIDSKMRLKKKGKPRSPSIGWSSP) is disordered.

It belongs to the eukaryotic ribosomal protein eL32 family.

This Thermococcus gammatolerans (strain DSM 15229 / JCM 11827 / EJ3) protein is Large ribosomal subunit protein eL32.